The following is a 101-amino-acid chain: Small ribosomal subunit protein uS14 (101 aa).

The protein belongs to the universal ribosomal protein uS14 family. In terms of assembly, part of the 30S ribosomal subunit. Contacts proteins S3 and S10.

In terms of biological role, binds 16S rRNA, required for the assembly of 30S particles and may also be responsible for determining the conformation of the 16S rRNA at the A site. This Wigglesworthia glossinidia brevipalpis protein is Small ribosomal subunit protein uS14.